A 173-amino-acid polypeptide reads, in one-letter code: Transcription factor E (173 aa).

In terms of domain architecture, HTH TFE/IIEalpha-type spans 9–92 (NNPATRAYIH…LWQLRIDLLY (84 aa)).

This sequence belongs to the TFE family. In terms of assembly, monomer. Interaction with RNA polymerase subunits RpoF and RpoE is necessary for Tfe stimulatory transcription activity. Able to interact with Tbp and RNA polymerase in the absence of DNA promoter. Interacts both with the preinitiation and elongation complexes.

Functionally, transcription factor that plays a role in the activation of archaeal genes transcribed by RNA polymerase. Facilitates transcription initiation by enhancing TATA-box recognition by TATA-box-binding protein (Tbp), and transcription factor B (Tfb) and RNA polymerase recruitment. Not absolutely required for transcription in vitro, but particularly important in cases where Tbp or Tfb function is not optimal. It dynamically alters the nucleic acid-binding properties of RNA polymerases by stabilizing the initiation complex and destabilizing elongation complexes. Seems to translocate with the RNA polymerase following initiation and acts by binding to the non template strand of the transcription bubble in elongation complexes. The chain is Transcription factor E from Methanoregula boonei (strain DSM 21154 / JCM 14090 / 6A8).